The following is a 271-amino-acid chain: Regulatory protein RecX (271 aa).

Belongs to the RecX family.

Its subcellular location is the cytoplasm. Functionally, modulates RecA activity. In Lactobacillus gasseri (strain ATCC 33323 / DSM 20243 / BCRC 14619 / CIP 102991 / JCM 1131 / KCTC 3163 / NCIMB 11718 / NCTC 13722 / AM63), this protein is Regulatory protein RecX.